Consider the following 404-residue polypeptide: Serine/threonine transporter SstT (404 aa).

9 consecutive transmembrane segments (helical) span residues 11–31 (IINA…IILA), 44–64 (LGGL…FVLV), 82–102 (IISL…TMSF), 144–164 (TANY…LHHA), 179–199 (VSFI…GLVA), 218–238 (GVLL…MVFI), 290–310 (IPLG…VLTL), 316–336 (MGIQ…AISA), and 363–383 (VAMQ…SAET).

Belongs to the dicarboxylate/amino acid:cation symporter (DAACS) (TC 2.A.23) family.

Its subcellular location is the cell inner membrane. It carries out the reaction L-serine(in) + Na(+)(in) = L-serine(out) + Na(+)(out). It catalyses the reaction L-threonine(in) + Na(+)(in) = L-threonine(out) + Na(+)(out). Involved in the import of serine and threonine into the cell, with the concomitant import of sodium (symport system). In Desulfotalea psychrophila (strain LSv54 / DSM 12343), this protein is Serine/threonine transporter SstT.